Here is a 437-residue protein sequence, read N- to C-terminus: MISTQYLIPTYWHRCSISEQLTLLTRPINKHNNSIHLDVKYILDHVSKLGDNALIKFNLQFDYVNTISLKISPNKIINSGNSLSKPIKKAIHSAIDNITRFHTAQYFPKVDLEIIPGVRCKQIIRPLHTIGLYVPGGSTPLPSTVMMLGIPAKIAQCKRIILCSPPPIPNIILYTAQLCGIEEIYQVGGAQAIAAMGFGTESIPRVDKIFGPGNIWVTEAKRQIHYITNKVAIDMLAGPSEILIIADKTANPIFIAADLLSQAEHGPDSHIILITPDMNLAQQTRQELYKQIQNLDRIDIIHQSLTHARIIITDNIMECFQISNDYAPEHLLIQTQNPENYLKYITNAGSIFLGHWSPESAGDYASGTNHVLPTYGHATTTSALGVADFQKRILVQELTQHGLLQLSSTIQTLTKIEKLKAHEYSVIHRINYIKGTT.

Residues Tyr133, Gln191, and Asn214 each contribute to the NAD(+) site. Residues Ser240, Gln262, and His265 each contribute to the substrate site. Zn(2+)-binding residues include Gln262 and His265. Residues Glu329 and His330 each act as proton acceptor in the active site. Substrate is bound by residues His330, Asp363, Glu417, and His422. Residue Asp363 coordinates Zn(2+). His422 lines the Zn(2+) pocket.

It belongs to the histidinol dehydrogenase family. Homodimer. Zn(2+) serves as cofactor.

It carries out the reaction L-histidinol + 2 NAD(+) + H2O = L-histidine + 2 NADH + 3 H(+). It functions in the pathway amino-acid biosynthesis; L-histidine biosynthesis; L-histidine from 5-phospho-alpha-D-ribose 1-diphosphate: step 9/9. Functionally, catalyzes the sequential NAD-dependent oxidations of L-histidinol to L-histidinaldehyde and then to L-histidine. The chain is Histidinol dehydrogenase from Blochmanniella floridana.